The chain runs to 71 residues: UPF0352 protein VCM66_1964 (71 aa).

This sequence belongs to the UPF0352 family.

This is UPF0352 protein VCM66_1964 from Vibrio cholerae serotype O1 (strain M66-2).